We begin with the raw amino-acid sequence, 104 residues long: Urease subunit beta (104 aa).

The protein belongs to the urease beta subunit family. Heterotrimer of UreA (gamma), UreB (beta) and UreC (alpha) subunits. Three heterotrimers associate to form the active enzyme.

The protein localises to the cytoplasm. The catalysed reaction is urea + 2 H2O + H(+) = hydrogencarbonate + 2 NH4(+). It functions in the pathway nitrogen metabolism; urea degradation; CO(2) and NH(3) from urea (urease route): step 1/1. This chain is Urease subunit beta, found in Methylocella silvestris (strain DSM 15510 / CIP 108128 / LMG 27833 / NCIMB 13906 / BL2).